Here is a 429-residue protein sequence, read N- to C-terminus: C4-dicarboxylate transport protein (429 aa).

8 helical membrane passes run 9-29 (VLYV…HFYP), 45-65 (LIKM…IAGM), 79-99 (LLYF…ATHI), 149-169 (GEIL…AHLG), 185-205 (VLFG…FGAM), 223-243 (LIGT…GTIA), 308-328 (IYMT…LTWM), and 356-376 (AATL…ILGI).

The protein belongs to the dicarboxylate/amino acid:cation symporter (DAACS) (TC 2.A.23) family.

The protein resides in the cell inner membrane. Responsible for the transport of dicarboxylates such as succinate, fumarate, and malate from the periplasm across the membrane. This chain is C4-dicarboxylate transport protein, found in Burkholderia ambifaria (strain ATCC BAA-244 / DSM 16087 / CCUG 44356 / LMG 19182 / AMMD) (Burkholderia cepacia (strain AMMD)).